The chain runs to 219 residues: Dynein light chain Tctex-type 4 (219 aa).

Residues 1-84 form a disordered region; sequence MAGRPVPAGR…RRPSLGPVPP (84 aa). Basic and acidic residues predominate over residues 10–20; the sequence is RQEEELAKDPG. At Ser64 the chain carries Phosphoserine.

It belongs to the dynein light chain Tctex-type family. Interacts with ENG/endoglin, TGFBR2 and TGFBR3. Interacts with PPP1CC.

The protein localises to the cell projection. Its subcellular location is the cilium. The protein resides in the flagellum. It is found in the cytoplasmic vesicle. It localises to the secretory vesicle. The protein localises to the acrosome. Its subcellular location is the cytoplasm. The protein resides in the cytoskeleton. It is found in the cilium axoneme. It localises to the nucleus. The protein localises to the microtubule organizing center. This is Dynein light chain Tctex-type 4 (DYNLT4) from Sus scrofa (Pig).